A 696-amino-acid polypeptide reads, in one-letter code: Elongation factor G (696 aa).

The tr-type G domain occupies 8–286 (EDVRNIGIAA…AVVHYLPSPV (279 aa)). Residues 17–24 (AHIDAGKT), 81–85 (DTPGH), and 135–138 (NKMD) contribute to the GTP site.

It belongs to the TRAFAC class translation factor GTPase superfamily. Classic translation factor GTPase family. EF-G/EF-2 subfamily.

Its subcellular location is the cytoplasm. Its function is as follows. Catalyzes the GTP-dependent ribosomal translocation step during translation elongation. During this step, the ribosome changes from the pre-translocational (PRE) to the post-translocational (POST) state as the newly formed A-site-bound peptidyl-tRNA and P-site-bound deacylated tRNA move to the P and E sites, respectively. Catalyzes the coordinated movement of the two tRNA molecules, the mRNA and conformational changes in the ribosome. The protein is Elongation factor G of Sulfurovum sp. (strain NBC37-1).